The following is a 246-amino-acid chain: Eukaryotic translation initiation factor 6 (246 aa).

2 positions are modified to phosphoserine; by CK1: serine 174 and serine 175.

Belongs to the eIF-6 family. Monomer. Associates with the 60S ribosomal subunit. Post-translationally, phosphorylation at Ser-174 and Ser-175 promotes nuclear export.

It is found in the cytoplasm. The protein localises to the nucleus. Its subcellular location is the nucleolus. In terms of biological role, binds to the 60S ribosomal subunit and prevents its association with the 40S ribosomal subunit to form the 80S initiation complex in the cytoplasm. Is also involved in ribosome biogenesis. Associates with pre-60S subunits in the nucleus and is involved in its nuclear export. This chain is Eukaryotic translation initiation factor 6 (tif-6), found in Neurospora crassa (strain ATCC 24698 / 74-OR23-1A / CBS 708.71 / DSM 1257 / FGSC 987).